The primary structure comprises 421 residues: MKGENINNIHLVLKKMLWTSLIVFIFLIGRNILIPGVDAKQLARFLNNQYLLQIVNGTTGGDLSRMSLFALGLGPWMSATILWRVLTLIKRFDLKKIPIERTFLFKIAIAIIIGFIQSIAIISNIDINPKISIFAQTQFGAMATISLIMVSGAVFLVWLSNMNEILGIGGPTVLILASMIINWPTNVSLYILENVRSSLDINSVILMLVIMISIVFLVLLTVVVQRAQRQIPIRRILVNNNFYQQSYLPIQINPAGGMPLMYSMTLLVLPQYILQAVHYWLPNNVLVENGLDNIAITKPLGVTAYIIILFALSIGFAFININPDQIAEDLQQNSDYIDNVEPGDATREYITEIVFRLSFVGALYMSLIAGFPLYFGIIDKQYTQYALTAGSIIILVNLVINIIDQMKALLTKNNYSALFFE.

10 helical membrane passes run 17-37, 69-89, 102-122, 139-159, 165-185, 204-224, 254-274, 299-319, 358-378, and 383-403; these read LWTS…IPGV, FALG…LTLI, TFLF…IAII, FGAM…LVWL, ILGI…NWPT, VILM…TVVV, PAGG…QYIL, PLGV…FAFI, SFVG…FGII, and TQYA…INII.

The protein belongs to the SecY/SEC61-alpha family. SecY2 subfamily. Component of the accessory SecA2/SecY2 protein translocase complex required to export cell wall proteins. May form heterotrimers with SecE and SecG subunits.

It localises to the cell membrane. Part of the accessory SecA2/SecY2 system specifically required for export of possible cell wall proteins. The central subunit of a protein translocation channel. This is Accessory Sec system protein translocase subunit SecY2 from Leuconostoc gelidum subsp. gasicomitatum (strain DSM 15947 / CCUG 46042 / CECT 5767 / JCM 12535 / LMG 18811 / NBRC 113245 / TB1-10) (Leuconostoc gasicomitatum).